We begin with the raw amino-acid sequence, 274 residues long: Elongation factor Ts (274 aa).

Residues 79–82 (TDFV) form an involved in Mg(2+) ion dislocation from EF-Tu region.

This sequence belongs to the EF-Ts family.

The protein resides in the cytoplasm. In terms of biological role, associates with the EF-Tu.GDP complex and induces the exchange of GDP to GTP. It remains bound to the aminoacyl-tRNA.EF-Tu.GTP complex up to the GTP hydrolysis stage on the ribosome. This chain is Elongation factor Ts, found in Azobacteroides pseudotrichonymphae genomovar. CFP2.